A 320-amino-acid chain; its full sequence is Protein MRH1 (320 aa).

Over 1 to 34 (MSTFETLIKRGGNEAIKINPPTGADFHITSRGSD) the chain is Extracellular. A helical membrane pass occupies residues 35–55 (WFWTCFCCYLLFGLILTFLMF). The Cytoplasmic portion of the chain corresponds to 56–62 (RKPVNDR). The helical transmembrane segment at 63–83 (FFYLTGIAPNFFMCIAYFTMA) threads the bilayer. At 84-116 (SNLGWIPVKAKYNHVQTSTQKEHPGYRQIFYSR) the chain is on the extracellular side. Residues 117–137 (FVGWFLALPWPIIQICMLAGT) form a helical membrane-spanning segment. At 138–141 (PFWQ) the chain is on the cytoplasmic side. A helical transmembrane segment spans residues 142 to 162 (MAFNVCITEFFTVCWLIAACV). Residues 163 to 167 (HSTYK) are Extracellular-facing. Residues 168–188 (WGYYTIGLGAAIVVSISVMTT) form a helical membrane-spanning segment. The Cytoplasmic segment spans residues 189 to 204 (SYNLVKQRDNDIRLTF). Residues 205-225 (LVFFSIIMFLWIIAYPTCFGI) traverse the membrane as a helical segment. Residues 226-238 (TDGGNVLQPDSAG) are Extracellular-facing. Residues 239-259 (IFYGIIDLILMCFIPTLLVPI) form a helical membrane-spanning segment. Residues 260–320 (ANHFGADKLG…KSKKSKKSEE (61 aa)) are Cytoplasmic-facing. A disordered region spans residues 285–320 (APVASPRPAATPNLSKDKKKKSKKSKKSKKSKKSEE). S289 is modified (phosphoserine). T295 bears the Phosphothreonine mark. At S299 the chain carries Phosphoserine. Basic residues predominate over residues 301 to 320 (DKKKKSKKSKKSKKSKKSEE).

This sequence belongs to the archaeal/bacterial/fungal opsin family.

Its subcellular location is the cell membrane. The protein resides in the mitochondrion. The protein localises to the bud. The sequence is that of Protein MRH1 (MRH1) from Saccharomyces cerevisiae (strain ATCC 204508 / S288c) (Baker's yeast).